The sequence spans 399 residues: S-adenosylmethionine synthase (399 aa).

Position 17 (H17) interacts with ATP. D19 provides a ligand contact to Mg(2+). E45 lines the K(+) pocket. Residues E58 and Q101 each coordinate L-methionine. The tract at residues 101 to 111 is flexible loop; the sequence is QSPDIAQGVDE. ATP-binding positions include 177-179, 244-245, D253, 259-260, A276, and K280; these read DAK, RF, and RK. An L-methionine-binding site is contributed by D253. K284 serves as a coordination point for L-methionine.

This sequence belongs to the AdoMet synthase family. In terms of assembly, homotetramer; dimer of dimers. The cofactor is Mg(2+). It depends on K(+) as a cofactor.

Its subcellular location is the cytoplasm. The enzyme catalyses L-methionine + ATP + H2O = S-adenosyl-L-methionine + phosphate + diphosphate. Its pathway is amino-acid biosynthesis; S-adenosyl-L-methionine biosynthesis; S-adenosyl-L-methionine from L-methionine: step 1/1. Catalyzes the formation of S-adenosylmethionine (AdoMet) from methionine and ATP. The overall synthetic reaction is composed of two sequential steps, AdoMet formation and the subsequent tripolyphosphate hydrolysis which occurs prior to release of AdoMet from the enzyme. This is S-adenosylmethionine synthase from Listeria innocua serovar 6a (strain ATCC BAA-680 / CLIP 11262).